The chain runs to 343 residues: Multidrug resistance protein MdtN (343 aa).

The Cytoplasmic portion of the chain corresponds to 1–12 (MESTPKKAPRSK). A helical; Signal-anchor for type II membrane protein transmembrane segment spans residues 13 to 33 (FPALLVVALALVALVFVIWRV). Residues 34-343 (DSAPSTNDAY…ASAVANLEPQ (310 aa)) are Periplasmic-facing.

This sequence belongs to the membrane fusion protein (MFP) (TC 8.A.1) family. Could be part of a tripartite efflux system composed of MdtN, MdtO and MdtP.

It is found in the cell inner membrane. Could be involved in resistance to puromycin, acriflavine and tetraphenylarsonium chloride. This Escherichia coli (strain K12) protein is Multidrug resistance protein MdtN (mdtN).